The sequence spans 692 residues: Elongation factor G (692 aa).

The tr-type G domain maps to 9 to 284; it reads EKIRNIGIMA…AVVDYLPSPV (276 aa). GTP is bound by residues 18–25, 82–86, and 136–139; these read AHIDAGKT, DTPGH, and NKMD.

The protein belongs to the TRAFAC class translation factor GTPase superfamily. Classic translation factor GTPase family. EF-G/EF-2 subfamily.

Its subcellular location is the cytoplasm. Catalyzes the GTP-dependent ribosomal translocation step during translation elongation. During this step, the ribosome changes from the pre-translocational (PRE) to the post-translocational (POST) state as the newly formed A-site-bound peptidyl-tRNA and P-site-bound deacylated tRNA move to the P and E sites, respectively. Catalyzes the coordinated movement of the two tRNA molecules, the mRNA and conformational changes in the ribosome. In Neorickettsia sennetsu (strain ATCC VR-367 / Miyayama) (Ehrlichia sennetsu), this protein is Elongation factor G.